The sequence spans 98 residues: Late cornified envelope-like proline-rich protein 1 (98 aa).

The disordered stretch occupies residues 1–26 (MSSDDKSKSNDPKTEPKNCDPKCEQK).

It belongs to the cornifin (SPRR) family.

The sequence is that of Late cornified envelope-like proline-rich protein 1 (LELP1) from Homo sapiens (Human).